A 732-amino-acid chain; its full sequence is Polyribonucleotide nucleotidyltransferase (732 aa).

The Mg(2+) site is built by Asp-483 and Asp-489. Residues 550-609 form the KH domain; that stretch reads PRIVTVQIPVDKIGELIGPKGKNIRGIQDETGAELSVEDDGTVTIAAVGGDSMERAKQMV. Residues 619–687 form the S1 motif domain; the sequence is GETYEGTVKT…ERGRLRLSMK (69 aa). Positions 684–732 are disordered; sequence LSMKALLPKPEGMPDEPPQSERPRRDDGERSGGDRGGRGGRNGGGRDRR. Positions 702-720 are enriched in basic and acidic residues; it reads QSERPRRDDGERSGGDRGG.

It belongs to the polyribonucleotide nucleotidyltransferase family. Requires Mg(2+) as cofactor.

It is found in the cytoplasm. The catalysed reaction is RNA(n+1) + phosphate = RNA(n) + a ribonucleoside 5'-diphosphate. In terms of biological role, involved in mRNA degradation. Catalyzes the phosphorolysis of single-stranded polyribonucleotides processively in the 3'- to 5'-direction. The sequence is that of Polyribonucleotide nucleotidyltransferase from Gemmatimonas aurantiaca (strain DSM 14586 / JCM 11422 / NBRC 100505 / T-27).